The chain runs to 35 residues: Z-limacoditoxin(1)-Dv1 (35 aa).

An N-terminal signal peptide occupies residues 1–22; sequence MKKTFLPIFLVILLASYALANP. At Gln23 the chain carries Pyrrolidone carboxylic acid. The residue at position 32 (Pro32) is a Proline amide.

This sequence belongs to the limacoditoxin-1 (ACP-like) family. Expressed by the venom secretory cell of the spine. The spine is a cuticular structure containing a single large nucleated venom-secreting cell at its base. It is an independent unit capable of producing, storing and injecting venom. On the back of D.vulnerans caterpillars, spines are grouped together by 50 to 100 to form scoli, of which there are eight in D.vulnerans.

The protein resides in the secreted. Functionally, potently activates insect G protein-coupled receptor. It activates the ACP receptor (ACPR) from the mosquito A.aegypti (EC(50)=0.55 nM) with a potency comparable to that of the endogenous ligand. Has no activity on receptors of the closely related neuropeptides adipokinetic hormone and corazonin. In vivo, does not reveal any observable effects when injected into crickets (A.domesticus). Does not induce increase in intracellular calcium in mouse DRG neurons, suggesting that it does not induce pain. The chain is Z-limacoditoxin(1)-Dv1 from Doratifera vulnerans (Mottled cup moth).